The primary structure comprises 587 residues: Serine/threonine-protein phosphatase 2A 65 kDa regulatory subunit A beta isoform (587 aa).

Ser2 bears the N-acetylserine mark. 14 HEAT repeats span residues 2-42 (SMID…ALGE), 44-80 (RTRK…YVGG), 81-119 (VEYA…QMRE), 158-196 (DMLK…TVES), 197-235 (AHLK…LLEP), 236-274 (QDCV…AVGP), 275-313 (EPTR…ILNP), 315-352 (IAIQ…VLGK), 353-391 (DATI…VIGI), 393-430 (LLSQ…QLGV), 432-469 (FFDD…EFGP), 470-508 (EWAM…VMGS), 509-547 (EITC…IVDQ), and 549-586 (VVEK…VMMS).

This sequence belongs to the phosphatase 2A regulatory subunit A family. As to quaternary structure, PP2A consists of a common heterodimeric core enzyme, composed of a 36 kDa catalytic subunit (subunit C) and a 65 kDa constant regulatory subunit (subunit A), that associates with a variety of regulatory subunits such as subunits B (the R2/B/PR55/B55, R3/B''/PR72/PR130/PR59 and R5/B'/B56 families). Interacts with B'THETA. Interacts with SRK2E/OST1. Interacts with SIC/RON3. Ubiquitous, with higher levels in roots and flowers (at protein level).

The protein resides in the cytoplasm. The protein localises to the cytosol. It localises to the nucleus. It is found in the peroxisome. The A subunit of protein phosphatase 2A serves as a scaffolding molecule to coordinate the assembly of the catalytic subunit and a variable regulatory B subunit. Involved during developmental process such as seedling and floral developments. Seems to act as a negative regulator of PP2A catalytic activity. Associates with the serine/threonine-protein phosphatase PP2A catalytic subunit C and regulatory subunit B' to positively regulates beta-oxidation of fatty acids and protoauxins in peroxisomes by dephosphorylating peroxisomal beta-oxidation-related proteins. The polypeptide is Serine/threonine-protein phosphatase 2A 65 kDa regulatory subunit A beta isoform (PP2AA2) (Arabidopsis thaliana (Mouse-ear cress)).